The sequence spans 307 residues: Pyridoxal 5'-phosphate synthase subunit PdxS (307 aa).

D37 provides a ligand contact to D-ribose 5-phosphate. K94 (schiff-base intermediate with D-ribose 5-phosphate) is an active-site residue. A D-ribose 5-phosphate-binding site is contributed by G166. R178 provides a ligand contact to D-glyceraldehyde 3-phosphate. Residues G227 and 248–249 (GS) each bind D-ribose 5-phosphate.

The protein belongs to the PdxS/SNZ family. In the presence of PdxT, forms a dodecamer of heterodimers.

It catalyses the reaction aldehydo-D-ribose 5-phosphate + D-glyceraldehyde 3-phosphate + L-glutamine = pyridoxal 5'-phosphate + L-glutamate + phosphate + 3 H2O + H(+). The protein operates within cofactor biosynthesis; pyridoxal 5'-phosphate biosynthesis. In terms of biological role, catalyzes the formation of pyridoxal 5'-phosphate from ribose 5-phosphate (RBP), glyceraldehyde 3-phosphate (G3P) and ammonia. The ammonia is provided by the PdxT subunit. Can also use ribulose 5-phosphate and dihydroxyacetone phosphate as substrates, resulting from enzyme-catalyzed isomerization of RBP and G3P, respectively. In Mycobacterium leprae (strain Br4923), this protein is Pyridoxal 5'-phosphate synthase subunit PdxS.